Consider the following 196-residue polypeptide: Molybdenum cofactor guanylyltransferase (196 aa).

Residues 10–12 (LAG), lysine 23, asparagine 51, aspartate 69, and aspartate 99 contribute to the GTP site. Aspartate 99 provides a ligand contact to Mg(2+).

The protein belongs to the MobA family. In terms of assembly, monomer. Mg(2+) serves as cofactor.

Its subcellular location is the cytoplasm. It catalyses the reaction Mo-molybdopterin + GTP + H(+) = Mo-molybdopterin guanine dinucleotide + diphosphate. Transfers a GMP moiety from GTP to Mo-molybdopterin (Mo-MPT) cofactor (Moco or molybdenum cofactor) to form Mo-molybdopterin guanine dinucleotide (Mo-MGD) cofactor. This chain is Molybdenum cofactor guanylyltransferase, found in Shewanella baltica (strain OS155 / ATCC BAA-1091).